Consider the following 394-residue polypeptide: Putative agmatinase 1 (394 aa).

Positions 1–20 (MALQSLFLILLAGAAQLAQA) are cleaved as a signal peptide. Mn(2+) contacts are provided by histidine 186, aspartate 209, histidine 211, aspartate 213, aspartate 307, and aspartate 309.

The protein belongs to the arginase family. The cofactor is Mn(2+).

The catalysed reaction is agmatine + H2O = urea + putrescine. This Schizosaccharomyces pombe (strain 972 / ATCC 24843) (Fission yeast) protein is Putative agmatinase 1.